Reading from the N-terminus, the 474-residue chain is Glutamate--tRNA ligase 1 (474 aa).

Residues 11-21 (PSPTGYLHIGG) carry the 'HIGH' region motif. The short motif at 240–244 (KLSKR) is the 'KMSKS' region element. K243 is a binding site for ATP.

The protein belongs to the class-I aminoacyl-tRNA synthetase family. Glutamate--tRNA ligase type 1 subfamily. Monomer.

The protein localises to the cytoplasm. It carries out the reaction tRNA(Glu) + L-glutamate + ATP = L-glutamyl-tRNA(Glu) + AMP + diphosphate. Catalyzes the attachment of glutamate to tRNA(Glu) in a two-step reaction: glutamate is first activated by ATP to form Glu-AMP and then transferred to the acceptor end of tRNA(Glu). The polypeptide is Glutamate--tRNA ligase 1 (Mesorhizobium japonicum (strain LMG 29417 / CECT 9101 / MAFF 303099) (Mesorhizobium loti (strain MAFF 303099))).